Consider the following 136-residue polypeptide: Large ribosomal subunit protein bL17 (136 aa).

Belongs to the bacterial ribosomal protein bL17 family. As to quaternary structure, part of the 50S ribosomal subunit. Contacts protein L32.

This chain is Large ribosomal subunit protein bL17, found in Rickettsia canadensis (strain McKiel).